A 76-amino-acid chain; its full sequence is Short coiled-coil protein B (76 aa).

Residues 6–52 (ENQVELEEKTRLINQVLELQNTLEDLSARVDAVKEENLKLKSENQVL) adopt a coiled-coil conformation.

It belongs to the SCOC family.

Its subcellular location is the golgi apparatus membrane. It is found in the golgi apparatus. It localises to the trans-Golgi network. The protein localises to the cytoplasm. The protein resides in the cytosol. Positive regulator of amino acid starvation-induced autophagy. In Danio rerio (Zebrafish), this protein is Short coiled-coil protein B (scocb).